A 2510-amino-acid chain; its full sequence is Highly reducing polyketide synthase g433 (2510 aa).

Residues 1-54 (MAPGRTDVTVAENGNGLHTAHNGVSNGTSNGTNGTSHTSNGTNSSAKTTSNGVH) form a disordered region. The span at 22 to 45 (NGVSNGTSNGTNGTSHTSNGTNSS) shows a compositional bias: low complexity. Positions 58 to 477 (DIPIAIVGMG…GANAHAVIDS (420 aa)) constitute a Ketosynthase family 3 (KS3) domain. Catalysis depends on for beta-ketoacyl synthase activity residues cysteine 229, histidine 365, and histidine 400. Residues 574–880 (FVFTGQGAQW…VPTLVRGQND (307 aa)) form a malonyl-CoA:ACP transacylase (MAT) domain region. Residues 942 to 1070 (HDLLGCQVFE…GQVKAGRADS (129 aa)) form an N-terminal hotdog fold region. The dehydratase (DH) domain stretch occupies residues 942 to 1226 (HDLLGCQVFE…NLRLAPAADD (285 aa)). Residues 942-1229 (HDLLGCQVFE…LAPAADDTGG (288 aa)) form the PKS/mFAS DH domain. Histidine 974 serves as the catalytic Proton acceptor; for dehydratase activity. Positions 1083–1229 (PRKVSSTRWY…LAPAADDTGG (147 aa)) are C-terminal hotdog fold. The Proton donor; for dehydratase activity role is filled by aspartate 1144. Positions 1395–1574 (DFLGLVSHDK…FDGAEAVIYD (180 aa)) are methyltransferase (CMet) domain. The tract at residues 1787 to 2097 (GSLKTLRWVQ…KGQHMGKLVI (311 aa)) is enoyl reductase (ER) (ER) domain. Residues 2122-2296 (SYLLVGGLGG…ASVLDISIIE (175 aa)) are ketoreductase (KR) domain. Residues 2419-2496 (SSVSFLANEI…KLGEAAAEGL (78 aa)) form the Carrier domain. An O-(pantetheine 4'-phosphoryl)serine modification is found at serine 2456.

It functions in the pathway mycotoxin biosynthesis. In terms of biological role, highly reducing polyketide synthase; part of the gene cluster that mediates the biosynthesis of 1233A, a natural compound known as an inhibitor of HMG-CoA synthase in the mevalonate pathway and with antibacterial and antifungal activities. The highly reducing polyketide synthase g433 gene is responsible for the 1233A backbone biosynthesis and the cytochrome P450 monooxygenase g430 catalyzes oxidation of the backbone. This chain is Highly reducing polyketide synthase g433, found in Fusarium sp.